A 659-amino-acid chain; its full sequence is Mannosyl-oligosaccharide 1,2-alpha-mannosidase IA (659 aa).

The Cytoplasmic segment spans residues 1-48; that stretch reads MPVGGLLPLFSSPAGGGLGGGLGGGLGGGGGGGGRKGSGPSAFRLTEK. Residues 49-69 form a helical; Signal-anchor for type II membrane protein membrane-spanning segment; that stretch reads FVLLLVFSAFITLCFGAIFFL. Over 70-659 the chain is Lumenal; the sequence is PDSSKLLSGV…NIKKVEDNEK (590 aa). Positions 88-121 are disordered; that stretch reads QPAADHKPGPGARAEDAADGRARPGEEGAPGDPA. Residues 91-113 show a composition bias toward basic and acidic residues; the sequence is ADHKPGPGARAEDAADGRARPGE. Cysteine 482 and cysteine 514 are disulfide-bonded. Glutamate 528 functions as the Proton donor in the catalytic mechanism. Residue threonine 639 participates in Ca(2+) binding.

Belongs to the glycosyl hydrolase 47 family. Ca(2+) is required as a cofactor.

The protein localises to the endoplasmic reticulum membrane. It catalyses the reaction N(4)-(alpha-D-Man-(1-&gt;2)-alpha-D-Man-(1-&gt;2)-alpha-D-Man-(1-&gt;3)-[alpha-D-Man-(1-&gt;2)-alpha-D-Man-(1-&gt;3)-[alpha-D-Man-(1-&gt;2)-alpha-D-Man-(1-&gt;6)]-alpha-D-Man-(1-&gt;6)]-beta-D-Man-(1-&gt;4)-beta-D-GlcNAc-(1-&gt;4)-beta-D-GlcNAc)-L-asparaginyl-[protein] (N-glucan mannose isomer 9A1,2,3B1,2,3) + 4 H2O = N(4)-(alpha-D-Man-(1-&gt;3)-[alpha-D-Man-(1-&gt;3)-[alpha-D-Man-(1-&gt;6)]-alpha-D-Man-(1-&gt;6)]-beta-D-Man-(1-&gt;4)-beta-D-GlcNAc-(1-&gt;4)-beta-D-GlcNAc)-L-asparaginyl-[protein] (N-glucan mannose isomer 5A1,2) + 4 beta-D-mannose. The catalysed reaction is N(4)-(alpha-D-Man-(1-&gt;2)-alpha-D-Man-(1-&gt;2)-alpha-D-Man-(1-&gt;3)-[alpha-D-Man-(1-&gt;3)-[alpha-D-Man-(1-&gt;2)-alpha-D-Man-(1-&gt;6)]-alpha-D-Man-(1-&gt;6)]-beta-D-Man-(1-&gt;4)-beta-D-GlcNAc-(1-&gt;4)-beta-D-GlcNAc)-L-asparaginyl-[protein] (N-glucan mannose isomer 8A1,2,3B1,3) + 3 H2O = N(4)-(alpha-D-Man-(1-&gt;3)-[alpha-D-Man-(1-&gt;3)-[alpha-D-Man-(1-&gt;6)]-alpha-D-Man-(1-&gt;6)]-beta-D-Man-(1-&gt;4)-beta-D-GlcNAc-(1-&gt;4)-beta-D-GlcNAc)-L-asparaginyl-[protein] (N-glucan mannose isomer 5A1,2) + 3 beta-D-mannose. The protein operates within protein modification; protein glycosylation. With respect to regulation, inhibited by both 1-deoxymannojirimycin and kifunensine. Its function is as follows. Involved in the maturation of Asn-linked oligosaccharides. Progressively trim alpha-1,2-linked mannose residues from Man(9)GlcNAc(2) to produce Man(5)GlcNAc(2). The protein is Mannosyl-oligosaccharide 1,2-alpha-mannosidase IA (MAN1A1) of Sus scrofa (Pig).